A 143-amino-acid polypeptide reads, in one-letter code: Peptide methionine sulfoxide reductase MsrB (143 aa).

The 123-residue stretch at 5-127 (KEKRLKELNR…NSAALKFIPK (123 aa)) folds into the MsrB domain. The active-site Nucleophile is the cysteine 116.

This sequence belongs to the MsrB Met sulfoxide reductase family.

The enzyme catalyses L-methionyl-[protein] + [thioredoxin]-disulfide + H2O = L-methionyl-(R)-S-oxide-[protein] + [thioredoxin]-dithiol. The sequence is that of Peptide methionine sulfoxide reductase MsrB from Bacillus pumilus (strain SAFR-032).